Here is a 297-residue protein sequence, read N- to C-terminus: Farnesyl diphosphate synthase (297 aa).

The isopentenyl diphosphate site is built by lysine 47, arginine 50, and histidine 79. Mg(2+) contacts are provided by aspartate 86 and aspartate 92. Arginine 97 is a (2E)-geranyl diphosphate binding site. Arginine 98 is an isopentenyl diphosphate binding site. Residues lysine 183, threonine 184, glutamine 221, and lysine 238 each coordinate (2E)-geranyl diphosphate.

It belongs to the FPP/GGPP synthase family. Mg(2+) is required as a cofactor.

It is found in the cytoplasm. The catalysed reaction is isopentenyl diphosphate + (2E)-geranyl diphosphate = (2E,6E)-farnesyl diphosphate + diphosphate. This chain is Farnesyl diphosphate synthase, found in Geobacillus stearothermophilus (Bacillus stearothermophilus).